We begin with the raw amino-acid sequence, 296 residues long: Probable lipid kinase YegS-like (296 aa).

Residues 1 to 130 (MPHTLLILNG…IDLAQVNDKH (130 aa)) form the DAGKc domain. ATP-binding positions include T37, 63 to 69 (GDGTINE), and T92. Residues L212, D215, and L217 each contribute to the Mg(2+) site. Catalysis depends on E268, which acts as the Proton acceptor.

This sequence belongs to the diacylglycerol/lipid kinase family. YegS lipid kinase subfamily. Requires Mg(2+) as cofactor. Ca(2+) is required as a cofactor.

Its subcellular location is the cytoplasm. Probably phosphorylates lipids; the in vivo substrate is unknown. The protein is Probable lipid kinase YegS-like of Yersinia enterocolitica serotype O:8 / biotype 1B (strain NCTC 13174 / 8081).